Here is a 302-residue protein sequence, read N- to C-terminus: uncharacterized protein (302 aa).

2 disordered regions span residues 1-167 (MPCR…QSSE) and 180-199 (PSLC…QRAS). Over residues 39 to 54 (EESHAPSRDPRDHQGS) the composition is skewed to basic and acidic residues. 2 stretches are compositionally biased toward polar residues: residues 123 to 133 (LSTSSCASVSR) and 183 to 197 (CPSQ…SPQR).

This is an uncharacterized protein from Homo sapiens (Human).